Reading from the N-terminus, the 330-residue chain is Beta-ketoacyl-[acyl-carrier-protein] synthase III 2 (330 aa).

Catalysis depends on residues C118 and H246. The tract at residues Q247–R251 is ACP-binding. N276 is a catalytic residue.

Belongs to the thiolase-like superfamily. FabH family. As to quaternary structure, homodimer.

The protein resides in the cytoplasm. The catalysed reaction is malonyl-[ACP] + acetyl-CoA + H(+) = 3-oxobutanoyl-[ACP] + CO2 + CoA. Its pathway is lipid metabolism; fatty acid biosynthesis. Its function is as follows. Catalyzes the condensation reaction of fatty acid synthesis by the addition to an acyl acceptor of two carbons from malonyl-ACP. Catalyzes the first condensation reaction which initiates fatty acid synthesis and may therefore play a role in governing the total rate of fatty acid production. Possesses both acetoacetyl-ACP synthase and acetyl transacylase activities. Its substrate specificity determines the biosynthesis of branched-chain and/or straight-chain of fatty acids. The chain is Beta-ketoacyl-[acyl-carrier-protein] synthase III 2 from Streptomyces coelicolor (strain ATCC BAA-471 / A3(2) / M145).